The sequence spans 865 residues: Protein translocase subunit SecA (865 aa).

Residues Q85, 103-107, and D505 each bind ATP; that span reads GEGKT. 4 residues coordinate Zn(2+): C847, C849, C858, and H859.

The protein belongs to the SecA family. In terms of assembly, monomer and homodimer. Part of the essential Sec protein translocation apparatus which comprises SecA, SecYEG and auxiliary proteins SecDF. Other proteins may also be involved. Zn(2+) is required as a cofactor.

Its subcellular location is the cell membrane. The protein localises to the cytoplasm. The enzyme catalyses ATP + H2O + cellular proteinSide 1 = ADP + phosphate + cellular proteinSide 2.. Functionally, part of the Sec protein translocase complex. Interacts with the SecYEG preprotein conducting channel. Has a central role in coupling the hydrolysis of ATP to the transfer of proteins into and across the cell membrane, serving as an ATP-driven molecular motor driving the stepwise translocation of polypeptide chains across the membrane. The polypeptide is Protein translocase subunit SecA (Lactococcus lactis subsp. cremoris (strain SK11)).